Here is a 417-residue protein sequence, read N- to C-terminus: 4-hydroxy-3-methylbut-2-en-1-yl diphosphate synthase (flavodoxin) (417 aa).

[4Fe-4S] cluster is bound by residues cysteine 307, cysteine 310, cysteine 353, and glutamate 360.

This sequence belongs to the IspG family. [4Fe-4S] cluster serves as cofactor.

It carries out the reaction (2E)-4-hydroxy-3-methylbut-2-enyl diphosphate + oxidized [flavodoxin] + H2O + 2 H(+) = 2-C-methyl-D-erythritol 2,4-cyclic diphosphate + reduced [flavodoxin]. It participates in isoprenoid biosynthesis; isopentenyl diphosphate biosynthesis via DXP pathway; isopentenyl diphosphate from 1-deoxy-D-xylulose 5-phosphate: step 5/6. Its function is as follows. Converts 2C-methyl-D-erythritol 2,4-cyclodiphosphate (ME-2,4cPP) into 1-hydroxy-2-methyl-2-(E)-butenyl 4-diphosphate. The chain is 4-hydroxy-3-methylbut-2-en-1-yl diphosphate synthase (flavodoxin) from Xylella fastidiosa (strain 9a5c).